Reading from the N-terminus, the 1399-residue chain is DNA-directed RNA polymerase subunit beta' (1399 aa).

Zn(2+) is bound by residues Cys70, Cys72, Cys85, and Cys88. Mg(2+)-binding residues include Asp460, Asp462, and Asp464. Zn(2+) contacts are provided by Cys814, Cys888, Cys895, and Cys898.

The protein belongs to the RNA polymerase beta' chain family. As to quaternary structure, the RNAP catalytic core consists of 2 alpha, 1 beta, 1 beta' and 1 omega subunit. When a sigma factor is associated with the core the holoenzyme is formed, which can initiate transcription. The cofactor is Mg(2+). Requires Zn(2+) as cofactor.

The catalysed reaction is RNA(n) + a ribonucleoside 5'-triphosphate = RNA(n+1) + diphosphate. In terms of biological role, DNA-dependent RNA polymerase catalyzes the transcription of DNA into RNA using the four ribonucleoside triphosphates as substrates. This Pseudomonas syringae pv. syringae (strain B728a) protein is DNA-directed RNA polymerase subunit beta'.